A 598-amino-acid chain; its full sequence is Elongation factor 4 (598 aa).

In terms of domain architecture, tr-type G spans 4-185; sequence KNIRNFSIIA…TIITKIPAPK (182 aa). Residues 16 to 21 and 132 to 135 contribute to the GTP site; these read DHGKST and NKID.

It belongs to the TRAFAC class translation factor GTPase superfamily. Classic translation factor GTPase family. LepA subfamily.

It is found in the cell inner membrane. It carries out the reaction GTP + H2O = GDP + phosphate + H(+). Required for accurate and efficient protein synthesis under certain stress conditions. May act as a fidelity factor of the translation reaction, by catalyzing a one-codon backward translocation of tRNAs on improperly translocated ribosomes. Back-translocation proceeds from a post-translocation (POST) complex to a pre-translocation (PRE) complex, thus giving elongation factor G a second chance to translocate the tRNAs correctly. Binds to ribosomes in a GTP-dependent manner. The polypeptide is Elongation factor 4 (Campylobacter jejuni subsp. jejuni serotype O:2 (strain ATCC 700819 / NCTC 11168)).